Consider the following 447-residue polypeptide: 3-phosphoshikimate 1-carboxyvinyltransferase (447 aa).

The 3-phosphoshikimate site is built by Lys-36, Ser-37, and Arg-41. A phosphoenolpyruvate-binding site is contributed by Lys-36. Gly-109 and Arg-138 together coordinate phosphoenolpyruvate. The 3-phosphoshikimate site is built by Ser-183, Gln-185, Asp-333, and Lys-360. Gln-185 is a binding site for phosphoenolpyruvate. Asp-333 functions as the Proton acceptor in the catalytic mechanism. Arg-364 and Arg-406 together coordinate phosphoenolpyruvate.

It belongs to the EPSP synthase family. In terms of assembly, monomer.

Its subcellular location is the cytoplasm. The enzyme catalyses 3-phosphoshikimate + phosphoenolpyruvate = 5-O-(1-carboxyvinyl)-3-phosphoshikimate + phosphate. Its pathway is metabolic intermediate biosynthesis; chorismate biosynthesis; chorismate from D-erythrose 4-phosphate and phosphoenolpyruvate: step 6/7. Catalyzes the transfer of the enolpyruvyl moiety of phosphoenolpyruvate (PEP) to the 5-hydroxyl of shikimate-3-phosphate (S3P) to produce enolpyruvyl shikimate-3-phosphate and inorganic phosphate. The chain is 3-phosphoshikimate 1-carboxyvinyltransferase from Synechocystis sp. (strain ATCC 27184 / PCC 6803 / Kazusa).